The sequence spans 486 residues: Serine/threonine-protein phosphatase 2A 56 kDa regulatory subunit alpha isoform (486 aa).

Ser2 is modified (N-acetylserine). Residues 22–52 (DGFTRKSVRKAQRQKRSQGSSQFRSQGSQAE) are disordered. A compositionally biased stretch (basic residues) spans 27–37 (KSVRKAQRQKR). A compositionally biased stretch (low complexity) spans 38-51 (SQGSSQFRSQGSQA). Residues Ser41, Ser42, and Ser49 each carry the phosphoserine modification.

The protein belongs to the phosphatase 2A regulatory subunit B56 family. PP2A consists of a common heterodimeric core enzyme, composed of a 36 kDa catalytic subunit (subunit C) and a 65 kDa constant regulatory subunit (PR65 or subunit A), that associates with a variety of regulatory subunits. Proteins that associate with the core dimer include three families of regulatory subunits B (the R2/B/PR55/B55, R3/B''/PR72/PR130/PR59 and R5/B'/B56 families), the 48 kDa variable regulatory subunit, viral proteins, and cell signaling molecules. Interacts with SGO1. In terms of tissue distribution, widely expressed with highest levels in thymus and ovary.

Its subcellular location is the cytoplasm. It is found in the nucleus. The protein localises to the chromosome. It localises to the centromere. Its function is as follows. The B regulatory subunit might modulate substrate selectivity and catalytic activity, and might also direct the localization of the catalytic enzyme to a particular subcellular compartment. The chain is Serine/threonine-protein phosphatase 2A 56 kDa regulatory subunit alpha isoform (Ppp2r5a) from Mus musculus (Mouse).